The following is a 67-amino-acid chain: uncharacterized protein (67 aa).

This is an uncharacterized protein from Caenorhabditis elegans.